The sequence spans 31 residues: DRCIWPKEGFSIYWNIPTHFCHNFGVYFKEL.

It belongs to the glycosyl hydrolase 56 family. Contains 2 disulfide bonds. In terms of processing, N-glycosylated on at least two Asn residues by identical heptasaccharide units composed of Man, GlcNAc, and Fuc residues in the molar ration of 3:2:2. In terms of tissue distribution, expressed by the venom gland.

The protein localises to the secreted. It catalyses the reaction Random hydrolysis of (1-&gt;4)-linkages between N-acetyl-beta-D-glucosamine and D-glucuronate residues in hyaluronate.. In terms of biological role, hydrolyzes high molecular weight hyaluronic acid to produce small oligosaccharides. In Vespula maculifrons (Eastern yellow jacket), this protein is Hyaluronidase.